The primary structure comprises 379 residues: Homoserine O-acetyltransferase (379 aa).

Residues 54–332 (NAILVCHALS…PYQSEEIVKS (279 aa)) form the AB hydrolase-1 domain. Serine 159 acts as the Nucleophile in catalysis. Arginine 228 is a substrate binding site. Active-site residues include aspartate 318 and histidine 352. Aspartate 353 lines the substrate pocket.

The protein belongs to the AB hydrolase superfamily. MetX family. As to quaternary structure, homodimer.

It is found in the cytoplasm. The enzyme catalyses L-homoserine + acetyl-CoA = O-acetyl-L-homoserine + CoA. It participates in amino-acid biosynthesis; L-methionine biosynthesis via de novo pathway; O-acetyl-L-homoserine from L-homoserine: step 1/1. Transfers an acetyl group from acetyl-CoA to L-homoserine, forming acetyl-L-homoserine. The chain is Homoserine O-acetyltransferase from Leptospira meyeri.